Here is a 340-residue protein sequence, read N- to C-terminus: ATPase BagA (340 aa).

ATP-binding residues include G31, G33, K34, S35, T36, N240, P316, and V318.

This sequence belongs to the arsA ATPase family. BagA/BagB subfamily. As to quaternary structure, forms a heterodimer composed of BagA and BagB. Interacts with Rv1509. Also interacts with a large number of proteins, including proteins required for mycolic acid biosynthesis.

The ATPase activity of the BagAB complex is not stimulated by antimonite, an arsenite substitute, suggesting that BagAB is not a transporter for this family of elements. In terms of biological role, component of the heterodimeric BagAB ATPase complex, whose two subunits are actively involved in ATP hydrolysis. The ATPase activity is required to mediate resistance against nitric oxide (NO) and elevated levels of glycerol. The chain is ATPase BagA from Mycobacterium tuberculosis (strain ATCC 25618 / H37Rv).